Here is a 353-residue protein sequence, read N- to C-terminus: uncharacterized protein (353 aa).

Residues 1–30 (MHLRHLFSSRLRGSLLLGSLLVVSSFSTQA) form the signal peptide.

As to quaternary structure, monomer.

This is an uncharacterized protein from Escherichia coli (strain K12).